We begin with the raw amino-acid sequence, 585 residues long: Stage II sporulation protein E (585 aa).

2 consecutive transmembrane segments (helical) span residues 40-57 (LGAR…GLYA) and 70-86 (SLTA…FVLK). Residues 355–565 (DTGVAHAAKG…DDMTVVVAKL (211 aa)) form the PPM-type phosphatase domain.

Its subcellular location is the cell membrane. The enzyme catalyses O-phospho-L-seryl-[protein] + H2O = L-seryl-[protein] + phosphate. It carries out the reaction O-phospho-L-threonyl-[protein] + H2O = L-threonyl-[protein] + phosphate. Its function is as follows. Normally needed for pro-sigma E processing during sporulation but can be bypassed in vegetative cells. Activates SpoIIAA by dephosphorylation. The sequence is that of Stage II sporulation protein E (spoIIE) from Priestia megaterium (Bacillus megaterium).